Here is a 322-residue protein sequence, read N- to C-terminus: Retinal homeobox protein Rx-A (322 aa).

The Octapeptide motif signature appears at 32 to 39; that stretch reads HSIEAILG. A compositionally biased stretch (basic and acidic residues) spans 75–87; the sequence is TEEIHPQQEHLED. A disordered region spans residues 75–136; the sequence is TEEIHPQQEH…KKKHRRNRTT (62 aa). A compositionally biased stretch (polar residues) spans 100–117; it reads KTSSECLSPGLSTSNSDN. A DNA-binding region (homeobox) is located at residues 130 to 189; sequence HRRNRTTFTTYQLHELERAFEKSHYPDVYSREELAMKVNLPEVRVQVWFQNRRAKWRRQE. Residues 302 to 315 carry the OAR motif; that stretch reads NSIASLRMKAKEHI. The Nuclear localization signal motif lies at 308–312; that stretch reads RMKAK.

Belongs to the paired homeobox family. Bicoid subfamily. As to expression, highly expressed in anterior neural plate followed by neural retina, pigmented epithelium, in pineal gland, diencephalon floor and epiphysis. At later stages, the neuroretina remains the primary site of expression. No expression in the developing lens and cornea.

It is found in the nucleus. Functionally, plays a critical role in eye formation by regulating the initial specification of retinal cells and/or their subsequent proliferation. This Xenopus laevis (African clawed frog) protein is Retinal homeobox protein Rx-A (rax-a).